Here is an 88-residue protein sequence, read N- to C-terminus: Small ribosomal subunit protein uS15 (88 aa).

Belongs to the universal ribosomal protein uS15 family. As to quaternary structure, part of the 30S ribosomal subunit. Forms a bridge to the 50S subunit in the 70S ribosome, contacting the 23S rRNA.

Functionally, one of the primary rRNA binding proteins, it binds directly to 16S rRNA where it helps nucleate assembly of the platform of the 30S subunit by binding and bridging several RNA helices of the 16S rRNA. Its function is as follows. Forms an intersubunit bridge (bridge B4) with the 23S rRNA of the 50S subunit in the ribosome. The sequence is that of Small ribosomal subunit protein uS15 from Opitutus terrae (strain DSM 11246 / JCM 15787 / PB90-1).